The following is a 386-amino-acid chain: 8-amino-7-oxononanoate synthase (386 aa).

A substrate-binding site is contributed by R20. 107–108 is a binding site for pyridoxal 5'-phosphate; sequence GY. H132 contributes to the substrate binding site. The pyridoxal 5'-phosphate site is built by S178, H206, and T234. Position 237 is an N6-(pyridoxal phosphate)lysine (K237). T351 serves as a coordination point for substrate.

The protein belongs to the class-II pyridoxal-phosphate-dependent aminotransferase family. BioF subfamily. In terms of assembly, homodimer. Pyridoxal 5'-phosphate serves as cofactor.

It catalyses the reaction 6-carboxyhexanoyl-[ACP] + L-alanine + H(+) = (8S)-8-amino-7-oxononanoate + holo-[ACP] + CO2. The protein operates within cofactor biosynthesis; biotin biosynthesis. In terms of biological role, catalyzes the decarboxylative condensation of pimeloyl-[acyl-carrier protein] and L-alanine to produce 8-amino-7-oxononanoate (AON), [acyl-carrier protein], and carbon dioxide. The chain is 8-amino-7-oxononanoate synthase from Aromatoleum aromaticum (strain DSM 19018 / LMG 30748 / EbN1) (Azoarcus sp. (strain EbN1)).